A 131-amino-acid chain; its full sequence is Gem-associated protein 7 (131 aa).

Methionine 1 bears the N-acetylmethionine mark. The SUZ-C domain occupies methionine 1 to glycine 29. Position 3 is a phosphothreonine (threonine 3). Residues arginine 65–proline 131 enclose the Sm domain.

Belongs to the gemin-7 family. Part of the core SMN complex that contains SMN1, GEMIN2/SIP1, DDX20/GEMIN3, GEMIN4, GEMIN5, GEMIN6, GEMIN7, GEMIN8 and STRAP/UNRIP. Part of the SMN-Sm complex that contains SMN1, GEMIN2/SIP1, DDX20/GEMIN3, GEMIN4, GEMIN5, GEMIN6, GEMIN7, GEMIN8, STRAP/UNRIP and the Sm proteins SNRPB, SNRPD1, SNRPD2, SNRPD3, SNRPE, SNRPF and SNRPG. Interacts with GEMIN6; the interaction is direct. Interacts with STRAP/UNRIP; the interaction is direct. Interacts with GEMIN8; the interaction is direct. Interacts with SNRPB, SNRPD2, SNRPD3 and SNRPE; the interaction is direct.

Its subcellular location is the nucleus. It localises to the nucleoplasm. It is found in the gem. The protein resides in the cytoplasm. Its function is as follows. The SMN complex catalyzes the assembly of small nuclear ribonucleoproteins (snRNPs), the building blocks of the spliceosome, and thereby plays an important role in the splicing of cellular pre-mRNAs. Most spliceosomal snRNPs contain a common set of Sm proteins SNRPB, SNRPD1, SNRPD2, SNRPD3, SNRPE, SNRPF and SNRPG that assemble in a heptameric protein ring on the Sm site of the small nuclear RNA to form the core snRNP (Sm core). In the cytosol, the Sm proteins SNRPD1, SNRPD2, SNRPE, SNRPF and SNRPG are trapped in an inactive 6S pICln-Sm complex by the chaperone CLNS1A that controls the assembly of the core snRNP. To assemble core snRNPs, the SMN complex accepts the trapped 5Sm proteins from CLNS1A forming an intermediate. Binding of snRNA inside 5Sm triggers eviction of the SMN complex, thereby allowing binding of SNRPD3 and SNRPB to complete assembly of the core snRNP. This chain is Gem-associated protein 7 (GEMIN7), found in Homo sapiens (Human).